A 57-amino-acid polypeptide reads, in one-letter code: Neurotoxin Oh9-1 (57 aa).

4 disulfide bridges follow: C3–C19, C12–C37, C41–C49, and C50–C55.

The protein belongs to the three-finger toxin family. Short-chain subfamily. As to expression, expressed by the venom gland.

It is found in the secreted. This toxin binds and inhibits rat muscle adult alpha-1-beta-1-delta-epsilon/CHRNA1-CHRNB1-CHRND-CHRNE (IC(50)=3.1 uM) and fetal alpha-1-beta-1-gamma-delta/CHRNA1-CHRNB1-CHRNG-CHRND (IC(50)=5.6 uM) nicotinic acetylcholine receptors (nAChR). Shows a very low inhibition on rat neuronal alpha-3-beta-2/CHRNA3-CHRNB2 nAChR (IC(50)=50.2 uM) nAChR. Binds to the acetylcholine-binding pocket and acts as a competitive antagonist. Does not inhibit human glycine receptor (homopentamer composed of alpha-1 subunits, GLRA1), but seems to potentiate it (about 2-fold increased activity). In Ophiophagus hannah (King cobra), this protein is Neurotoxin Oh9-1.